The primary structure comprises 508 residues: Cytochrome P450 monooxygenase aflV (508 aa).

The helical transmembrane segment at 18–38 (LTWWFLAVGGAWIVSKIIKIL) threads the bilayer. 4 N-linked (GlcNAc...) asparagine glycosylation sites follow: asparagine 192, asparagine 209, asparagine 302, and asparagine 408. Cysteine 453 lines the heme pocket.

Belongs to the cytochrome P450 family. Heme serves as cofactor.

The protein localises to the membrane. The protein operates within mycotoxin biosynthesis; aflatoxin biosynthesis. Functionally, cytochrome P450 monooxygenase; part of the gene cluster that mediates the biosynthesis of aflatoxins, a group of polyketide-derived furanocoumarins, and part of the most toxic and carcinogenic compounds among the known mycotoxins. The four major aflatoxins produced by A.parasiticus are aflatoxin B1 (AFB1), aflatoxin B2 (AFB2), aflatoxin G1 (AFG1) and aflatoxin G2 (AFG2). The role of the cytochrome P450 monooxygenase aflV in aflatoxin biosynthesis has still to be characterized. The biosynthesis of aflatoxins begins with the norsolorinic acid synthase aflC that combines a hexanoyl starter unit produced by the fatty acid synthase aflA/aflB and 7 malonyl-CoA extender units to synthesize the precursor NOR. The second step is the conversion of NOR to averantin and requires the norsolorinic acid ketoreductase aflD, which catalyzes the dehydration of norsolorinic acid to form (1'S)-averantin. The norsolorinic acid reductases aflE and aflF may also play a role in the conversion of NOR to AVN. The cytochrome P450 monooxygenase aflG then catalyzes the hydroxylation of AVN to 5'hydroxyaverantin (HAVN). The next step is performed by the 5'-hydroxyaverantin dehydrogenase aflH that transforms HAVN to 5'-oxoaverantin (OAVN) which is further converted to averufin (AVF) by aflK that plays a dual role in the pathway, as a 5'-oxoaverantin cyclase that mediates conversion of 5'-oxoaverantin, as well as a versicolorin B synthase in a later step in the pathway. The averufin oxidase aflI catalyzes the conversion of AVF to versiconal hemiacetal acetate (VHA). VHA is then the substrate for the versiconal hemiacetal acetate esterase aflJ to yield versiconal (VAL). Versicolorin B synthase aflK then converts VAL to versicolorin B (VERB) by closing the bisfuran ring of aflatoxin which is required for DNA-binding, thus giving to aflatoxin its activity as a mutagen. Then, the activity of the versicolorin B desaturase aflL leads to versicolorin A (VERA). A branch point starts from VERB since it can also be converted to dihydrodemethylsterigmatocystin (DMDHST), probably also by aflL, VERA being a precursor for aflatoxins B1 and G1, and DMDHST for aflatoxins B2 and G2. Next, the versicolorin reductase aflM and the cytochrome P450 monooxygenase aflN are involved in conversion of VERA to demethylsterigmatocystin (DMST). AflX and aflY seem also involved in this step, through probable aflX-mediated epoxide ring-opening step following versicolorin A oxidation and aflY-mediated Baeyer-Villiger oxidation required for the formation of the xanthone ring. The methyltransferase aflO then leads to the modification of DMST to sterigmatocystin (ST), and of DMDHST to dihydrosterigmatocystin (DHST). Both ST and DHST are then substrates of the O-methyltransferase aflP to yield O-methylsterigmatocystin (OMST) and dihydro-O-methylsterigmatocystin (DHOMST), respectively. Finally OMST is converted to aflatoxins B1 and G1, and DHOMST to aflatoxins B2 and G2, via the action of several enzymes including O-methylsterigmatocystin oxidoreductase aflQ, the cytochrome P450 monooxygenase aflU, but also the NADH-dependent flavin oxidoreductase nadA which is specifically required for the synthesis of AFG1. This is Cytochrome P450 monooxygenase aflV from Aspergillus parasiticus (strain ATCC 56775 / NRRL 5862 / SRRC 143 / SU-1).